Reading from the N-terminus, the 723-residue chain is Nicastrin (723 aa).

The first 16 residues, 1–16 (MKKWLVIVLIIAGIRC), serve as a signal peptide directing secretion. At 17-678 (DGFSDQVFRT…ESVNLYLMED (662 aa)) the chain is on the extracellular side. N-linked (GlcNAc...) asparagine glycosylation is found at N40, N181, N271, N328, N409, and N627. A helical membrane pass occupies residues 679-699 (ASFEYTMILIAVISALLSIFA). At 700-723 (VGRCSETTFIVDEGEPAAEGGEPL) the chain is on the cytoplasmic side.

The protein belongs to the nicastrin family. In terms of assembly, component of the gamma-secretase complex, a complex probably composed of the presenilin homodimer (sel-12, hop-1 or spe-4), nicastrin (aph-2), aph-1 and pen-2.

Its subcellular location is the membrane. Functionally, essential subunit of the gamma-secretase complex, an endoprotease complex that catalyzes the intramembrane cleavage of integral membrane proteins such as Notch (glp-1 or lin-12). It may represents a stabilizing cofactor required for the assembly of the gamma-secretase complex. This chain is Nicastrin (aph-2), found in Caenorhabditis elegans.